Consider the following 160-residue polypeptide: NADH-quinone oxidoreductase subunit B (160 aa).

4 residues coordinate [4Fe-4S] cluster: cysteine 37, cysteine 38, cysteine 102, and cysteine 132.

The protein belongs to the complex I 20 kDa subunit family. As to quaternary structure, NDH-1 is composed of 14 different subunits. Subunits NuoB, C, D, E, F, and G constitute the peripheral sector of the complex. It depends on [4Fe-4S] cluster as a cofactor.

Its subcellular location is the cell inner membrane. The enzyme catalyses a quinone + NADH + 5 H(+)(in) = a quinol + NAD(+) + 4 H(+)(out). Its function is as follows. NDH-1 shuttles electrons from NADH, via FMN and iron-sulfur (Fe-S) centers, to quinones in the respiratory chain. Couples the redox reaction to proton translocation (for every two electrons transferred, four hydrogen ions are translocated across the cytoplasmic membrane), and thus conserves the redox energy in a proton gradient. This Neisseria gonorrhoeae (strain NCCP11945) protein is NADH-quinone oxidoreductase subunit B.